The following is a 101-amino-acid chain: Urease subunit beta (101 aa).

Belongs to the urease beta subunit family. As to quaternary structure, heterotrimer of UreA (gamma), UreB (beta) and UreC (alpha) subunits. Three heterotrimers associate to form the active enzyme.

Its subcellular location is the cytoplasm. The catalysed reaction is urea + 2 H2O + H(+) = hydrogencarbonate + 2 NH4(+). It functions in the pathway nitrogen metabolism; urea degradation; CO(2) and NH(3) from urea (urease route): step 1/1. The sequence is that of Urease subunit beta from Burkholderia pseudomallei (strain 668).